A 269-amino-acid polypeptide reads, in one-letter code: GATA transcription factor 3 (269 aa).

The short motif at 136–143 (KPRTKRSR) is the Nuclear localization signal element. A GATA-type zinc finger spans residues 176 to 230 (LVFQRRCSHCGTNNTPQWRTGPVGPKTLCNACGVRFKSGRLCPEYRPADSPTFSN). Residues 245 to 269 (KSKELGEETGEASTKSDPVKFGSKW) are disordered.

It belongs to the type IV zinc-finger family. Class A subfamily. Mostly expressed in roots. Also expressed in stems, flowers and leaves.

It localises to the nucleus. Functionally, transcriptional activator that specifically binds 5'-GATA-3' or 5'-GAT-3' motifs within gene promoters. May be involved in the regulation of some light-responsive genes. This chain is GATA transcription factor 3 (GATA3), found in Arabidopsis thaliana (Mouse-ear cress).